Consider the following 368-residue polypeptide: Methionine import ATP-binding protein MetN (368 aa).

Residues 5-260 (IELNNLSVQF…PKEALTKQFI (256 aa)) enclose the ABC transporter domain. Position 41–48 (41–48 (GYSGAGKS)) interacts with ATP.

Belongs to the ABC transporter superfamily. Methionine importer (TC 3.A.1.24) family. As to quaternary structure, the complex is composed of two ATP-binding proteins (MetN), two transmembrane proteins (MetI) and a solute-binding protein (MetQ).

Its subcellular location is the cell membrane. It carries out the reaction L-methionine(out) + ATP + H2O = L-methionine(in) + ADP + phosphate + H(+). The catalysed reaction is D-methionine(out) + ATP + H2O = D-methionine(in) + ADP + phosphate + H(+). Its function is as follows. Part of the ABC transporter complex MetNIQ involved in methionine import. Responsible for energy coupling to the transport system. The polypeptide is Methionine import ATP-binding protein MetN (Lactococcus lactis subsp. lactis (strain IL1403) (Streptococcus lactis)).